A 24-amino-acid chain; its full sequence is Probable caffeoyl-CoA O-methyltransferase (24 aa).

The protein belongs to the class I-like SAM-binding methyltransferase superfamily. Cation-dependent O-methyltransferase family. CCoAMT subfamily. It depends on a divalent metal cation as a cofactor.

The enzyme catalyses (E)-caffeoyl-CoA + S-adenosyl-L-methionine = (E)-feruloyl-CoA + S-adenosyl-L-homocysteine + H(+). It functions in the pathway aromatic compound metabolism; phenylpropanoid biosynthesis. Its function is as follows. Methylates caffeoyl-CoA to feruloyl-CoA and 5-hydroxyferuloyl-CoA to sinapoyl-CoA. Plays a role in the synthesis of feruloylated polysaccharides. Involved in the reinforcement of the plant cell wall. Also involved in the responding to wounding or pathogen challenge by the increased formation of cell wall-bound ferulic acid polymers. This is Probable caffeoyl-CoA O-methyltransferase from Pinus pinaster (Maritime pine).